Consider the following 41-residue polypeptide: Omega-theraphotoxin-Hg1a (41 aa).

3 cysteine pairs are disulfide-bonded: Cys-7/Cys-21, Cys-14/Cys-26, and Cys-20/Cys-33.

The protein belongs to the neurotoxin 10 (Hwtx-1) family. 56 (SNX-482) subfamily. Expressed by the venom gland.

Its subcellular location is the secreted. Toxin that blocks vertebrate P/Q-type (Cav2.1/CACNA1A) and R-type (Cav2.3/CACNA1E) voltage-gated calcium channels. Also inhibits sodium channels (Nav) in bovine chromaffin cells by delaying sodium channel inactivation. In Hysterocrates gigas (Cameroon red baboon tarantula), this protein is Omega-theraphotoxin-Hg1a.